Consider the following 419-residue polypeptide: Serine hydroxymethyltransferase (419 aa).

Residues Leu-118 and Gly-122–Leu-124 each bind (6S)-5,6,7,8-tetrahydrofolate. The residue at position 226 (Lys-226) is an N6-(pyridoxal phosphate)lysine. Glu-242 serves as a coordination point for (6S)-5,6,7,8-tetrahydrofolate.

It belongs to the SHMT family. Homodimer. Requires pyridoxal 5'-phosphate as cofactor.

It is found in the cytoplasm. It catalyses the reaction (6R)-5,10-methylene-5,6,7,8-tetrahydrofolate + glycine + H2O = (6S)-5,6,7,8-tetrahydrofolate + L-serine. It functions in the pathway one-carbon metabolism; tetrahydrofolate interconversion. The protein operates within amino-acid biosynthesis; glycine biosynthesis; glycine from L-serine: step 1/1. Functionally, catalyzes the reversible interconversion of serine and glycine with tetrahydrofolate (THF) serving as the one-carbon carrier. This reaction serves as the major source of one-carbon groups required for the biosynthesis of purines, thymidylate, methionine, and other important biomolecules. Also exhibits THF-independent aldolase activity toward beta-hydroxyamino acids, producing glycine and aldehydes, via a retro-aldol mechanism. The protein is Serine hydroxymethyltransferase of Metamycoplasma arthritidis (strain 158L3-1) (Mycoplasma arthritidis).